The sequence spans 184 residues: MIDKAEIMDESAIMRAITRIAHEIIEKNKGVDNLALIGIQRRGVPLAKMIAEKIKGVEGKSVPVGILDITLYRDDLSMLSEHPIINGTQIDFPITDKKIVLVDDVLYTGRTVRAAIDALMDAGRPKMVQLAVLIDRGHRELPIRPDYVGKNVPTSRLEVVNVKLYEIDGVNCVTISDIEKGVRH.

A PRPP-binding motif is present at residues 99-111 (IVLVDDVLYTGRT).

Belongs to the purine/pyrimidine phosphoribosyltransferase family. PyrR subfamily. As to quaternary structure, homodimer and homohexamer; in equilibrium.

It catalyses the reaction UMP + diphosphate = 5-phospho-alpha-D-ribose 1-diphosphate + uracil. Functionally, regulates transcriptional attenuation of the pyrimidine nucleotide (pyr) operon by binding in a uridine-dependent manner to specific sites on pyr mRNA. This disrupts an antiterminator hairpin in the RNA and favors formation of a downstream transcription terminator, leading to a reduced expression of downstream genes. In terms of biological role, also displays a weak uracil phosphoribosyltransferase activity which is not physiologically significant. In Acetivibrio thermocellus (strain ATCC 27405 / DSM 1237 / JCM 9322 / NBRC 103400 / NCIMB 10682 / NRRL B-4536 / VPI 7372) (Clostridium thermocellum), this protein is Bifunctional protein PyrR.